The following is a 62-amino-acid chain: Large ribosomal subunit protein uL30 (62 aa).

The protein belongs to the universal ribosomal protein uL30 family. As to quaternary structure, part of the 50S ribosomal subunit.

The sequence is that of Large ribosomal subunit protein uL30 from Marinobacter nauticus (strain ATCC 700491 / DSM 11845 / VT8) (Marinobacter aquaeolei).